The following is a 294-amino-acid chain: Syntaxin-19 (294 aa).

The 63-residue stretch at 209–271 (LSEIEQRHKE…NNTKEKFGLA (63 aa)) folds into the t-SNARE coiled-coil homology domain.

The protein belongs to the syntaxin family. Interacts with EGFR.

The protein localises to the cell membrane. It is found in the cytoplasm. In terms of biological role, plays a role in endosomal trafficking of the epidermal growth factor receptor (EGFR). The sequence is that of Syntaxin-19 (STX19) from Homo sapiens (Human).